The primary structure comprises 86 residues: RQC P-site tRNA stabilizing factor (86 aa).

The 62-residue stretch at 1–62 folds into the S4 RNA-binding domain; the sequence is MRLDKFLKVS…QKLVTVQVNE (62 aa).

The protein belongs to the RqcP family. In terms of assembly, associates with stalled 50S ribosomal subunits. Binds to RqcH, 23S rRNA and the P-site tRNA. Does not require RqcH for association with 50S subunits. Crystallized 50S subunits are variously associated with an A/P-site tRNA with or without RqcH, as well as with P- and E-site tRNAs but no RqcH. Displaced from the 50S subunit by puromycin but not thiostrepton.

Functionally, key component of the ribosome quality control system (RQC), a ribosome-associated complex that mediates the extraction of incompletely synthesized nascent chains from stalled ribosomes and their subsequent degradation. RqcH recruits Ala-charged tRNA, and with RqcP directs the elongation of stalled nascent chains on 50S ribosomal subunits, leading to non-templated C-terminal alanine extensions (Ala tail). The Ala tail promotes nascent chain degradation. RqcP is associated with the translocation-like movement of the peptidyl-tRNA from the A-site into the P-site. RqcH, RqcP and charged tRNA(Ala) are necessary and sufficient to add an Ala tail to a model stalled nascent peptide; does not add Val. The polypeptide is RQC P-site tRNA stabilizing factor (Bacillus subtilis (strain 168)).